The primary structure comprises 198 residues: Probable GTP-binding protein EngB (198 aa).

One can recognise an EngB-type G domain in the interval 22–195; sequence DLPEIALAGR…WKAIHKMTKT (174 aa). GTP-binding positions include 30-37, 57-61, 75-78, 142-145, and 174-176; these read GRSNVGKS, GKTQT, DVPG, TKAD, and FSS. 2 residues coordinate Mg(2+): S37 and T59.

This sequence belongs to the TRAFAC class TrmE-Era-EngA-EngB-Septin-like GTPase superfamily. EngB GTPase family. The cofactor is Mg(2+).

Its function is as follows. Necessary for normal cell division and for the maintenance of normal septation. This chain is Probable GTP-binding protein EngB, found in Bacillus mycoides (strain KBAB4) (Bacillus weihenstephanensis).